Here is a 477-residue protein sequence, read N- to C-terminus: Glycogen synthase (477 aa).

ADP-alpha-D-glucose is bound at residue Lys-15.

Belongs to the glycosyltransferase 1 family. Bacterial/plant glycogen synthase subfamily.

The enzyme catalyses [(1-&gt;4)-alpha-D-glucosyl](n) + ADP-alpha-D-glucose = [(1-&gt;4)-alpha-D-glucosyl](n+1) + ADP + H(+). Its pathway is glycan biosynthesis; glycogen biosynthesis. Synthesizes alpha-1,4-glucan chains using ADP-glucose. The polypeptide is Glycogen synthase (Edwardsiella ictaluri (strain 93-146)).